The primary structure comprises 94 residues: Venom peptide SjAPI (94 aa).

The N-terminal stretch at 1–24 (MKWGALLCIFGFLAFCSVLDRGLG) is a signal peptide. The propeptide occupies 25–30 (WIPDIW). 5 disulfide bridges follow: C33/C70, C43/C66, C47/C62, C51/C92, and C72/C86. The TIL domain occupies 33–92 (CSSKNEEFQQCGSSCPETCANHKNPEPKSCAAVCFVGCVCKPGFIRDDLKGSICVKPEDC). The segment at 63–65 (AAV) is protease binding loop.

This sequence belongs to the serine protease inhibitor-like (TIL domain-containing) family. Expressed by the venom gland.

The protein resides in the secreted. Its function is as follows. Recombinant protein inhibits both alpha-chymotrypsin (Ki=97.1 nM) and elastase (Ki=3700 nM). This Scorpiops jendeki (Scorpion) protein is Venom peptide SjAPI.